The sequence spans 296 residues: Glycine--tRNA ligase alpha subunit (296 aa).

This sequence belongs to the class-II aminoacyl-tRNA synthetase family. As to quaternary structure, tetramer of two alpha and two beta subunits.

The protein resides in the cytoplasm. It carries out the reaction tRNA(Gly) + glycine + ATP = glycyl-tRNA(Gly) + AMP + diphosphate. The chain is Glycine--tRNA ligase alpha subunit from Francisella tularensis subsp. novicida (strain U112).